Reading from the N-terminus, the 698-residue chain is Polyphosphate kinase (698 aa).

Residue Asn-63 participates in ATP binding. Arg-390 and Arg-420 together coordinate Mg(2+). Residue His-450 is the Phosphohistidine intermediate of the active site. Positions 483, 579, and 607 each coordinate ATP.

Belongs to the polyphosphate kinase 1 (PPK1) family. Requires Mg(2+) as cofactor. Post-translationally, an intermediate of this reaction is the autophosphorylated ppk in which a phosphate is covalently linked to a histidine residue through a N-P bond.

It catalyses the reaction [phosphate](n) + ATP = [phosphate](n+1) + ADP. In terms of biological role, catalyzes the reversible transfer of the terminal phosphate of ATP to form a long-chain polyphosphate (polyP). The sequence is that of Polyphosphate kinase from Xylella fastidiosa (strain 9a5c).